A 444-amino-acid polypeptide reads, in one-letter code: Sonic hedgehog protein (444 aa).

A signal peptide spans 1-24 (MLVATQSLLLLSFICTLVTPPGLA). Residue C25 is the site of N-palmitoyl cysteine attachment. Residues 33–39 (KRRHPKK) carry the Cardin-Weintraub motif. Ca(2+) is bound by residues E90, E91, D96, T126, E127, D130, and D132. Residues H141, D148, and H183 each coordinate Zn(2+). G198 is lipidated: Cholesterol glycine ester. 3 tandem repeats follow at residues 386–393 (QVDLQSHH), 394–401 (QVDLQSHH), and 403–409 (VDLQSHH). Residues 386–409 (QVDLQSHHQVDLQSHHQVDLQSHH) form a 3 X 8 AA tandem repeats of Q-V-D-L-Q-S-H-H region.

The protein belongs to the hedgehog family. Interacts with HHATL/GUP1 which negatively regulates HHAT-mediated palmitoylation of the SHH N-terminus. Interacts with BOC and CDON. Interacts with HHIP. Interacts with DISP1 via its cholesterol anchor. Interacts with SCUBE2. As to quaternary structure, multimer. The C-terminal domain displays an autoproteolysis activity and a cholesterol transferase activity. Both activities result in the cleavage of the full-length protein and covalent attachment of a cholesterol moiety to the C-terminal of the newly generated N-terminal fragment (ShhN). Cholesterylation is required for the sonic hedgehog protein N-product targeting to lipid rafts and multimerization. ShhN is the active species in both local and long-range signaling, whereas the C-product (ShhC) is degraded in the reticulum endoplasmic. In terms of processing, N-palmitoylation by HHAT of ShhN is required for sonic hedgehog protein N-product multimerization and full activity. It is a prerequisite for the membrane-proximal positioning and the subsequent shedding of this N-terminal peptide. Post-translationally, the lipidated N- and C-terminal peptides of ShhNp can be cleaved (shedding). The N-terminal palmitoylated peptide is cleaved at the Cardin-Weintraub (CW) motif site. The cleavage reduced the interactions with heparan sulfate. The cleavage is enhanced by SCUBE2. Strongly expressed in notochord and neural floor plate during embryogenesis. In tadpole, high expression is observed in pancreas/stomach, moderate expression in tail, and low expression in intestine, brain, and hind limb.

The protein localises to the endoplasmic reticulum membrane. Its subcellular location is the golgi apparatus membrane. It localises to the cell membrane. The enzyme catalyses glycyl-L-cysteinyl-[protein] + cholesterol + H(+) = [protein]-C-terminal glycyl cholesterol ester + N-terminal L-cysteinyl-[protein]. Functionally, the C-terminal part of the sonic hedgehog protein precursor displays an autoproteolysis and a cholesterol transferase activity. Both activities result in the cleavage of the full-length protein into two parts (ShhN and ShhC) followed by the covalent attachment of a cholesterol moiety to the C-terminal of the newly generated ShhN. Both activities occur in the endoplasmic reticulum. Once cleaved, ShhC is degraded in the endoplasmic reticulum. The dually lipidated sonic hedgehog protein N-product (ShhNp) is a morphogen which is essential for a variety of patterning events during development. Induces ventral cell fate in the neural tube and somites. Involved in the patterning of the anterior-posterior axis of the developing limb bud. Essential for axon guidance. Binds to the patched (PTCH1) receptor, which functions in association with smoothened (SMO), to activate the transcription of target genes. In the absence of SHH, PTCH1 represses the constitutive signaling activity of SMO. The polypeptide is Sonic hedgehog protein (Xenopus laevis (African clawed frog)).